Consider the following 415-residue polypeptide: Peptide chain release factor subunit 1 (415 aa).

Belongs to the eukaryotic release factor 1 family. As to quaternary structure, heterodimer of two subunits, one of which binds GTP.

Its subcellular location is the cytoplasm. Functionally, directs the termination of nascent peptide synthesis (translation) in response to the termination codons UAA, UAG and UGA. This chain is Peptide chain release factor subunit 1, found in Methanosarcina mazei (strain ATCC BAA-159 / DSM 3647 / Goe1 / Go1 / JCM 11833 / OCM 88) (Methanosarcina frisia).